The sequence spans 572 residues: Light-independent protochlorophyllide reductase subunit N (572 aa).

[4Fe-4S] cluster contacts are provided by Cys106, Cys131, and Cys191. The segment at 249–268 (SLDSMKLPSGGREKQINDVN) is disordered.

The protein belongs to the BchN/ChlN family. In terms of assembly, protochlorophyllide reductase is composed of three subunits; ChlL, ChlN and ChlB. Forms a heterotetramer of two ChlB and two ChlN subunits. [4Fe-4S] cluster serves as cofactor.

It localises to the plastid. The protein resides in the chloroplast. The catalysed reaction is chlorophyllide a + oxidized 2[4Fe-4S]-[ferredoxin] + 2 ADP + 2 phosphate = protochlorophyllide a + reduced 2[4Fe-4S]-[ferredoxin] + 2 ATP + 2 H2O. It participates in porphyrin-containing compound metabolism; chlorophyll biosynthesis (light-independent). Functionally, component of the dark-operative protochlorophyllide reductase (DPOR) that uses Mg-ATP and reduced ferredoxin to reduce ring D of protochlorophyllide (Pchlide) to form chlorophyllide a (Chlide). This reaction is light-independent. The NB-protein (ChlN-ChlB) is the catalytic component of the complex. The polypeptide is Light-independent protochlorophyllide reductase subunit N (Oltmannsiellopsis viridis (Marine flagellate)).